The chain runs to 382 residues: Galactokinase (382 aa).

34–37 (EHTD) contributes to the substrate binding site. An ATP-binding site is contributed by 124–130 (GAGLSSS). Mg(2+) is bound by residues Ser-130 and Glu-162. Asp-174 serves as the catalytic Proton acceptor. Position 223 (Tyr-223) interacts with substrate.

Belongs to the GHMP kinase family. GalK subfamily.

Its subcellular location is the cytoplasm. The catalysed reaction is alpha-D-galactose + ATP = alpha-D-galactose 1-phosphate + ADP + H(+). Its pathway is carbohydrate metabolism; galactose metabolism. In terms of biological role, catalyzes the transfer of the gamma-phosphate of ATP to D-galactose to form alpha-D-galactose-1-phosphate (Gal-1-P). This Escherichia coli O157:H7 (strain EC4115 / EHEC) protein is Galactokinase.